Here is a 3707-residue protein sequence, read N- to C-terminus: CUB and sushi domain-containing protein 3 (3707 aa).

The tract at residues 1–21 (MKGIRKGESRAKESKPWEPGK) is disordered. At 1 to 42 (MKGIRKGESRAKESKPWEPGKRRCAKCGRLDFILMKKMGIKS) the chain is on the cytoplasmic side. The helical transmembrane segment at 43–63 (GFTFWNLVFLLTVSCVKGFIY) threads the bilayer. The Extracellular segment spans residues 64 to 3630 (TCGGTLKGLN…NQPHGTNSSS (3567 aa)). Disulfide bonds link cysteine 65-cysteine 91, cysteine 178-cysteine 218, cysteine 204-cysteine 235, and cysteine 241-cysteine 267. The CUB 1 domain occupies 65–173 (CGGTLKGLNG…HGFKVYYEEL (109 aa)). Asparagine 73 and asparagine 90 each carry an N-linked (GlcNAc...) asparagine glycan. The Sushi 1 domain maps to 176–237 (SSCGNPGVPP…WDFPVPICRA (62 aa)). The region spanning 241-345 (CGGTMRGSSG…RGFSAPYQGS (105 aa)) is the CUB 2 domain. Asparagine 361 and asparagine 409 each carry an N-linked (GlcNAc...) asparagine glycan. The tract at residues 394–435 (QRVQVTSLRNSGLDPNTSKDGLSPHPADTQSTRRRPRHAEQI) is disordered. Positions 396–413 (VQVTSLRNSGLDPNTSKD) are enriched in polar residues. The Sushi 2 domain occupies 484–545 (NLCPDPGEPE…WSDHRPVCKV (62 aa)). 6 cysteine pairs are disulfide-bonded: cysteine 486/cysteine 526, cysteine 512/cysteine 543, cysteine 548/cysteine 574, cysteine 664/cysteine 704, cysteine 690/cysteine 717, and cysteine 721/cysteine 747. The 112-residue stretch at 548–659 (CGSNLQGPSG…VGFKVNYKEI (112 aa)) folds into the CUB 3 domain. The 58-residue stretch at 662–719 (ESCGDPGTPLYGIREGDGFSNRDVLRFECQFGFELIGEKSIVCQENNQWSANIPICIF) folds into the Sushi 3 domain. The CUB 4 domain maps to 721 to 829 (CLSNFTAPMG…RGFNITYNTF (109 aa)). Residues asparagine 724 and asparagine 823 are each glycosylated (N-linked (GlcNAc...) asparagine). A Sushi 4 domain is found at 832–893 (NECPDPGIPI…WSGLIPKCGA (62 aa)). Intrachain disulfides connect cysteine 834-cysteine 875, cysteine 860-cysteine 891, and cysteine 895-cysteine 921. Residues 895–1003 (CGGHFSAPSG…NGFKIHYESV (109 aa)) form the CUB 5 domain. An N-linked (GlcNAc...) asparagine glycan is attached at asparagine 966. In terms of domain architecture, Sushi 5 spans 1008–1065 (YSCLDPGIPVHGRRYGHDFSIGSTVSFSCDSGYRLSHEEPLLCEKNHWWSHPLPTCDA). Intrachain disulfides connect cysteine 1010-cysteine 1050, cysteine 1036-cysteine 1063, and cysteine 1067-cysteine 1093. Positions 1067-1177 (CGGDVRGPSG…EGFNITFSEY (111 aa)) constitute a CUB 6 domain. Residues asparagine 1092, asparagine 1126, and asparagine 1171 are each glycosylated (N-linked (GlcNAc...) asparagine). The Sushi 6 domain occupies 1180 to 1239 (EPCEDPGIPQYGSRIGFNFGIGDTLTFSCSSGYRLEGTSEIICLGGGRRVWSAPLPRCVA). 3 disulfides stabilise this stretch: cysteine 1182–cysteine 1222, cysteine 1208–cysteine 1237, and cysteine 1241–cysteine 1267. Positions 1241 to 1349 (CGASATNNEG…EGFQLVYTSF (109 aa)) constitute a CUB 7 domain. N-linked (GlcNAc...) asparagine glycosylation occurs at asparagine 1280. In terms of domain architecture, Sushi 7 spans 1352 to 1412 (SHCEDPGIPQ…WDYPLPSCIA (61 aa)). Cystine bridges form between cysteine 1354-cysteine 1395, cysteine 1381-cysteine 1410, cysteine 1414-cysteine 1441, cysteine 1528-cysteine 1568, cysteine 1554-cysteine 1584, cysteine 1588-cysteine 1614, cysteine 1701-cysteine 1741, cysteine 1727-cysteine 1758, cysteine 1762-cysteine 1788, cysteine 1878-cysteine 1918, cysteine 1904-cysteine 1935, and cysteine 1939-cysteine 1965. A CUB 8 domain is found at 1414-1523 (CGGRFKGESS…SGFAIQFSSS (110 aa)). A Sushi 8 domain is found at 1526–1586 (TACRDPGVPM…WQPSPPVCIA (61 aa)). The N-linked (GlcNAc...) asparagine glycan is linked to asparagine 1536. The CUB 9 domain occupies 1588–1696 (CGGNLTGSSG…TGFHLEYKAK (109 aa)). N-linked (GlcNAc...) asparagine glycans are attached at residues asparagine 1591 and asparagine 1709. In terms of domain architecture, Sushi 9 spans 1699–1760 (ESCFDPGNIM…WNRALPSCHA (62 aa)). A CUB 10 domain is found at 1762–1870 (CGSRSTGSEG…KGFHFVYQAV (109 aa)). The N-linked (GlcNAc...) asparagine glycan is linked to asparagine 1781. One can recognise a Sushi 10 domain in the interval 1876 to 1937 (TQCSSVPEPR…WNDSLPTCIV (62 aa)). Asparagine 1929 is a glycosylation site (N-linked (GlcNAc...) asparagine). The 109-residue stretch at 1939-2047 (CGGILTKRKG…AGFHLEYTAI (109 aa)) folds into the CUB 11 domain. Residue asparagine 2019 is glycosylated (N-linked (GlcNAc...) asparagine). The region spanning 2050 to 2109 (DSCPEPQTPSSGIKIGDRYMVGDVVSFQCDQGYSLQGHSHITCMPGPVRRWNYPIPICLA) is the Sushi 11 domain. Disulfide bonds link cysteine 2052/cysteine 2092, cysteine 2078/cysteine 2107, and cysteine 2111/cysteine 2137. The CUB 12 domain maps to 2111 to 2219 (CGGAMSDFSG…QGFHIVYQAY (109 aa)). N-linked (GlcNAc...) asparagine glycosylation is present at asparagine 2155. The region spanning 2222 to 2281 (QSCPDPRPFRNGFVIGNDFTVGQTISFECFPGYTLIGNSALTCLHGVSRNWNHPLPRCEA) is the Sushi 12 domain. Disulfide bonds link cysteine 2224–cysteine 2264, cysteine 2250–cysteine 2279, and cysteine 2283–cysteine 2309. In terms of domain architecture, CUB 13 spans 2283-2394 (CGGNITAMNG…LSYHAYQLRV (112 aa)). Residues asparagine 2286, asparagine 2291, and asparagine 2324 are each glycosylated (N-linked (GlcNAc...) asparagine). Residues 2393–2454 (RVCQPPPPVP…MDGAPPVCQV (62 aa)) enclose the Sushi 13 domain. Cystine bridges form between cysteine 2395/cysteine 2437, cysteine 2423/cysteine 2452, and cysteine 2456/cysteine 2484. A CUB 14 domain is found at 2456 to 2567 (CPANELRLDS…KGFRIRYIAF (112 aa)). N-linked (GlcNAc...) asparagine glycans are attached at residues asparagine 2495 and asparagine 2537. Sushi domains follow at residues 2567–2629 (FYCS…ACQA), 2630–2691 (ISCG…RCVV), 2692–2756 (VTCP…YCQI), 2757–2814 (ISCG…RCLA), 2815–2872 (GHCG…SCVP), 2873–2930 (VSCG…MCKV), 2931–2992 (VNCS…ECIM), 2993–3050 (IDCG…HCSG), 3054–3111 (GTCG…ECKA), 3112–3170 (VQCG…NCTI), 3171–3230 (ISCG…TCRA), 3231–3288 (VTCP…QCLP), 3289–3346 (KFCG…HCIE), 3350–3408 (TSCE…ECIP), and 3409–3468 (HSCK…ICEA). Disulfide bonds link cysteine 2569/cysteine 2610, cysteine 2596/cysteine 2627, cysteine 2632/cysteine 2674, cysteine 2658/cysteine 2689, cysteine 2694/cysteine 2739, cysteine 2725/cysteine 2754, cysteine 2759/cysteine 2799, cysteine 2785/cysteine 2812, cysteine 2817/cysteine 2857, cysteine 2843/cysteine 2870, cysteine 2875/cysteine 2915, and cysteine 2901/cysteine 2928. Residues asparagine 2711 and asparagine 2742 are each glycosylated (N-linked (GlcNAc...) asparagine). N-linked (GlcNAc...) asparagine glycosylation is present at asparagine 2862. N-linked (GlcNAc...) asparagine glycosylation is found at asparagine 2932 and asparagine 2952. 18 disulfides stabilise this stretch: cysteine 2933-cysteine 2977, cysteine 2963-cysteine 2990, cysteine 2995-cysteine 3035, cysteine 3021-cysteine 3048, cysteine 3056-cysteine 3096, cysteine 3082-cysteine 3109, cysteine 3114-cysteine 3155, cysteine 3141-cysteine 3168, cysteine 3173-cysteine 3215, cysteine 3199-cysteine 3228, cysteine 3233-cysteine 3273, cysteine 3259-cysteine 3286, cysteine 3291-cysteine 3331, cysteine 3317-cysteine 3344, cysteine 3352-cysteine 3393, cysteine 3379-cysteine 3406, cysteine 3411-cysteine 3453, and cysteine 3438-cysteine 3466. Asparagine 3099 is a glycosylation site (N-linked (GlcNAc...) asparagine). N-linked (GlcNAc...) asparagine glycans are attached at residues asparagine 3158, asparagine 3167, asparagine 3194, asparagine 3208, and asparagine 3218. N-linked (GlcNAc...) asparagine glycosylation occurs at asparagine 3276. Asparagine 3364 is a glycosylation site (N-linked (GlcNAc...) asparagine). 5 N-linked (GlcNAc...) asparagine glycosylation sites follow: asparagine 3522, asparagine 3529, asparagine 3612, asparagine 3618, and asparagine 3627. A helical membrane pass occupies residues 3631 to 3651 (VAIAILVPFFALIFAGFGFYL). Topologically, residues 3652-3707 (YKQRTAPKTQYTGCSVHENNNGQAAFENPMYDTNAKSVEGKAVRFDPNLNTVCTMV) are cytoplasmic.

It belongs to the CSMD family. Weakly expressed in most tissues, except in brain. Expressed at intermediate level in brain, including cerebellum, substantia nigra, thalamus, spinal cord, hippocampus and fetal brain. Also expressed in testis.

It localises to the cell membrane. In terms of biological role, involved in dendrite development. This chain is CUB and sushi domain-containing protein 3 (CSMD3), found in Homo sapiens (Human).